The primary structure comprises 130 residues: Large ribosomal subunit protein bL12 (130 aa).

This sequence belongs to the bacterial ribosomal protein bL12 family. Homodimer. Part of the ribosomal stalk of the 50S ribosomal subunit. Forms a multimeric L10(L12)X complex, where L10 forms an elongated spine to which 2 to 4 L12 dimers bind in a sequential fashion. Binds GTP-bound translation factors.

In terms of biological role, forms part of the ribosomal stalk which helps the ribosome interact with GTP-bound translation factors. Is thus essential for accurate translation. The sequence is that of Large ribosomal subunit protein bL12 from Mycolicibacterium gilvum (strain PYR-GCK) (Mycobacterium gilvum (strain PYR-GCK)).